The chain runs to 433 residues: CinA-like protein (433 aa).

The protein belongs to the CinA family.

The chain is CinA-like protein from Prochlorococcus marinus (strain MIT 9515).